Reading from the N-terminus, the 392-residue chain is MRGSCERSGEDEEQKEEAMVACGRLSGVPEAEQGPEANWDSDLETEGTDGLGELVRDTLYLRSCRAHSVVPISCFLRQGSAQELNLRHRGLGPQGARALASSLSSNPYVKRLDLRDNGLCGAGAEALAGALSKSSSIHDVDLSENQLGVAGAQALCAALTVNQAMRKMQLSGNGLEEQAAQHLAELLLAHTDLKSLDLSYNQLNDQAGETLGPALAENTGLTELNVSWNHLRGPGAVAFARGLEANIFLKVLDISYNGFGDPGASAVGEALKANNVLEELNMSNNRISAMGALSLGLGLRVNQTLRILVVSRNPMRSEGCFGLLKSVQDNPASALELLDFSDIQVNAEFDGLASSVRGILPELCIKTGACRVEYKKELLPVFRSALPASVPK.

The disordered stretch occupies residues 24-46 (RLSGVPEAEQGPEANWDSDLETE). LRR repeat units lie at residues 106 to 129 (NPYV…ALAG), 134 to 157 (SSSI…ALCA), 162 to 185 (NQAM…HLAE), 192 to 213 (DLKS…TLGP), 220 to 241 (GLTE…AFAR), 248 to 269 (FLKV…AVGE), 276 to 297 (VLEE…SLGL), 304 to 325 (TLRI…GLLK), and 334 to 356 (ALEL…ASSV).

The sequence is that of Leucine-rich repeat-containing protein 74B from Homo sapiens (Human).